Reading from the N-terminus, the 256-residue chain is Probable ABC transporter ATP-binding protein SPy_0285/M5005_Spy0242 (256 aa).

One can recognise an ABC transporter domain in the interval Leu-4 to Gln-246. Gly-36–Ser-43 provides a ligand contact to ATP.

It belongs to the ABC transporter superfamily. Ycf16 family.

It localises to the cell membrane. This Streptococcus pyogenes serotype M1 protein is Probable ABC transporter ATP-binding protein SPy_0285/M5005_Spy0242.